Here is a 165-residue protein sequence, read N- to C-terminus: Phosphopantetheine adenylyltransferase (165 aa).

Residue Thr10 coordinates substrate. Residues 10 to 11 (TF) and His18 contribute to the ATP site. Positions 42, 75, and 89 each coordinate substrate. ATP is bound by residues 90 to 92 (GVR), Glu100, and 125 to 131 (YTYVAST).

It belongs to the bacterial CoaD family. Homohexamer. Requires Mg(2+) as cofactor.

The protein resides in the cytoplasm. It carries out the reaction (R)-4'-phosphopantetheine + ATP + H(+) = 3'-dephospho-CoA + diphosphate. It participates in cofactor biosynthesis; coenzyme A biosynthesis; CoA from (R)-pantothenate: step 4/5. Functionally, reversibly transfers an adenylyl group from ATP to 4'-phosphopantetheine, yielding dephospho-CoA (dPCoA) and pyrophosphate. In Chlorobaculum tepidum (strain ATCC 49652 / DSM 12025 / NBRC 103806 / TLS) (Chlorobium tepidum), this protein is Phosphopantetheine adenylyltransferase.